The chain runs to 127 residues: Classical arabinogalactan protein 10 (127 aa).

Residues 1–21 (MASKSVVVLLFLALIASSAIA) form the signal peptide. At Gln-22 the chain carries Pyrrolidone carboxylic acid. Residues 22–107 (QAPGPAPTRS…TGSTPVDNNN (86 aa)) are disordered. Residues Pro-24, Pro-26, Pro-28, Pro-32, and Pro-36 each carry the 4-hydroxyproline modification. Residues Pro-24, Pro-26, Pro-28, Pro-32, and Pro-36 are each glycosylated (O-linked (Ara...) hydroxyproline). Pro residues-rich tracts occupy residues 25-39 (GPAP…PAQP), 48-58 (SITPTPTPTPS), and 66-86 (VSPP…PPTS). The segment covering 98–107 (TGSTPVDNNN) has biased composition (polar residues). The GPI-anchor amidated asparagine moiety is linked to residue Asn-107. The propeptide at 108–127 (AATLAAGSLAGFVFVASLLL) is removed in mature form.

The protein belongs to the classical AGP family. Post-translationally, O-glycosylated on hydroxyprolines; noncontiguous hydroxylproline residues are glycosylated with arabinogalactan. Predominantly expressed in flowers and at a lower level in roots and siliques.

The protein localises to the cell membrane. Its function is as follows. Proteoglycan that seems to be implicated in diverse developmental roles such as differentiation, cell-cell recognition, embryogenesis and programmed cell death. The protein is Classical arabinogalactan protein 10 (AGP10) of Arabidopsis thaliana (Mouse-ear cress).